A 429-amino-acid polypeptide reads, in one-letter code: MAPIALKILLFTSLIVPSISLSDQARNGHARTICEVKPGGSSEIDDVPAIVDALTTCGSGGRVIFSNNTYHINSVMNTTWLDDVEIDLQGTLLWSTNISYWLNHSLPVGYQNQSTAWILGGKDIVFEGHGYGTFNGSGQTWYRYVGSTSNYPRRPNQLTVSGAMGAVFKGLRFVQSQMWTMSIIHTSNSWFDSIYVNNLYDDGGSAQNTDGANTIYSKNITLTNWEVVNGDDSISTKANSTDITIANCTFTSGLGIAIGSIGQYNGAFETVERLKISNITYEKTTHAVYFKTWTGDQVGYPPNGGGGGLGYASDIVATNLKTNNLKGAPFTISQCTTFSGASGNCTNSKFQIRDLVFTDISGTTDSSDVASFQCSAVAPCEDITIENVSLRIAGNTTHAEEYLCGNVDGTVGFNCTGDVCVGSSATGGC.

A signal peptide spans 1-20; the sequence is MAPIALKILLFTSLIVPSIS. Asn-67, Asn-77, Asn-97, Asn-103, Asn-112, Asn-135, and Asn-219 each carry an N-linked (GlcNAc...) asparagine glycan. The stretch at 217-238 is one PbH1 1 repeat; sequence SKNITLTNWEVVNGDDSISTKA. Asp-231 (proton donor) is an active-site residue. Residues Asn-239, Asn-247, Asn-278, and Asn-344 are each glycosylated (N-linked (GlcNAc...) asparagine). PbH1 repeat units follow at residues 240–260 and 271–292; these read STDI…AIGS and VERL…YFKT. Residues Cys-374 and Cys-380 are joined by a disulfide bond. 3 N-linked (GlcNAc...) asparagine glycosylation sites follow: Asn-387, Asn-395, and Asn-414.

The protein belongs to the glycosyl hydrolase 28 family.

It localises to the secreted. It catalyses the reaction Hydrolysis of terminal non-reducing alpha-L-rhamnose residues in alpha-L-rhamnosides.. Its function is as follows. Alpha-L-rhamnosidase which is able to degrade p-nitrophenyl-alpha-L-rhamnopyranoside (pnp_Rha). The natural substrate of this enzyme has not been identified yet. The polypeptide is Alpha-L-rhamnosidase rgxB (rgxB) (Aspergillus niger (strain ATCC MYA-4892 / CBS 513.88 / FGSC A1513)).